A 350-amino-acid chain; its full sequence is Uroporphyrinogen decarboxylase (350 aa).

Residues 28–32 (RQAGR), Phe47, Asp78, Tyr155, Ser210, and His325 each bind substrate.

The protein belongs to the uroporphyrinogen decarboxylase family. Homodimer.

It localises to the cytoplasm. It carries out the reaction uroporphyrinogen III + 4 H(+) = coproporphyrinogen III + 4 CO2. Its pathway is porphyrin-containing compound metabolism; protoporphyrin-IX biosynthesis; coproporphyrinogen-III from 5-aminolevulinate: step 4/4. Its function is as follows. Catalyzes the decarboxylation of four acetate groups of uroporphyrinogen-III to yield coproporphyrinogen-III. This is Uroporphyrinogen decarboxylase from Nostoc sp. (strain PCC 7120 / SAG 25.82 / UTEX 2576).